Reading from the N-terminus, the 149-residue chain is Vesicle-associated protein 3-1 (149 aa).

M1 carries the N-acetylmethionine modification. S2 carries the post-translational modification N-acetylserine; in Vesicle-associated protein 3-1, N-terminally processed. In terms of domain architecture, MSP spans 6–126 (LLEIEPMYLQ…EETKLRVTYV (121 aa)).

Belongs to the VAMP-associated protein (VAP) (TC 9.B.17) family.

Functionally, may play a role in vesicle trafficking. This Arabidopsis thaliana (Mouse-ear cress) protein is Vesicle-associated protein 3-1 (PVA31).